Reading from the N-terminus, the 141-residue chain is Large ribosomal subunit protein uL11 (141 aa).

The protein belongs to the universal ribosomal protein uL11 family. In terms of assembly, part of the ribosomal stalk of the 50S ribosomal subunit. Interacts with L10 and the large rRNA to form the base of the stalk. L10 forms an elongated spine to which L12 dimers bind in a sequential fashion forming a multimeric L10(L12)X complex. In terms of processing, one or more lysine residues are methylated.

Its function is as follows. Forms part of the ribosomal stalk which helps the ribosome interact with GTP-bound translation factors. This chain is Large ribosomal subunit protein uL11, found in Dinoroseobacter shibae (strain DSM 16493 / NCIMB 14021 / DFL 12).